The following is a 341-amino-acid chain: AB hydrolase superfamily protein C1039.03 (341 aa).

It belongs to the AB hydrolase superfamily.

Its subcellular location is the cytoplasm. The protein resides in the nucleus. The protein is AB hydrolase superfamily protein C1039.03 of Schizosaccharomyces pombe (strain 972 / ATCC 24843) (Fission yeast).